Reading from the N-terminus, the 315-residue chain is Diacylglycerol kinase (315 aa).

A DAGKc domain is found at 1–132 (MRKRARIIYN…VDIGKMNNRY (132 aa)). ATP contacts are provided by residues 10–14 (NPTSG), Thr41, 67–73 (GDGTLNE), and Thr94. The Mg(2+) site is built by Lys213, Asp216, and Tyr218. Glu273 acts as the Proton acceptor in catalysis.

It belongs to the diacylglycerol/lipid kinase family. In terms of assembly, homodimer. The cofactor is Mg(2+).

It catalyses the reaction a 1,2-diacyl-sn-glycerol + ATP = a 1,2-diacyl-sn-glycero-3-phosphate + ADP + H(+). Functionally, catalyzes the phosphorylation of diacylglycerol (DAG) into phosphatidic acid. Is a key enzyme involved in the production of lipoteichoic acid by reintroducing DAG formed from the breakdown of membrane phospholipids into the phosphatidylglycerol biosynthetic pathway. This is Diacylglycerol kinase (dagK) from Staphylococcus aureus (strain bovine RF122 / ET3-1).